The sequence spans 71 residues: Putative membrane protein insertion efficiency factor (71 aa).

Belongs to the UPF0161 family.

It localises to the cell membrane. Functionally, could be involved in insertion of integral membrane proteins into the membrane. This Desulforudis audaxviator (strain MP104C) protein is Putative membrane protein insertion efficiency factor.